We begin with the raw amino-acid sequence, 592 residues long: Isocitrate dehydrogenase kinase/phosphatase 1 (592 aa).

Residues 337–343 (APGTPGM) and Lys-358 each bind ATP. Asp-393 is an active-site residue.

Belongs to the AceK family.

It localises to the cytoplasm. The catalysed reaction is L-seryl-[isocitrate dehydrogenase] + ATP = O-phospho-L-seryl-[isocitrate dehydrogenase] + ADP + H(+). Bifunctional enzyme which can phosphorylate or dephosphorylate isocitrate dehydrogenase (IDH) on a specific serine residue. This is a regulatory mechanism which enables bacteria to bypass the Krebs cycle via the glyoxylate shunt in response to the source of carbon. When bacteria are grown on glucose, IDH is fully active and unphosphorylated, but when grown on acetate or ethanol, the activity of IDH declines drastically concomitant with its phosphorylation. This Pseudoalteromonas translucida (strain TAC 125) protein is Isocitrate dehydrogenase kinase/phosphatase 1.